Here is a 257-residue protein sequence, read N- to C-terminus: UPF0246 protein ECA3888 (257 aa).

Belongs to the UPF0246 family.

The chain is UPF0246 protein ECA3888 from Pectobacterium atrosepticum (strain SCRI 1043 / ATCC BAA-672) (Erwinia carotovora subsp. atroseptica).